The sequence spans 530 residues: Protein transport protein SEC9 (530 aa).

The tract at residues Met-1 to Leu-274 is disordered. A compositionally biased stretch (basic and acidic residues) spans Gln-8–Ser-22. Low complexity-rich tracts occupy residues Asn-61–Gly-100 and Gly-122–Pro-141. Residues Tyr-142–Lys-160 are compositionally biased toward polar residues. Positions Ser-161 to Gly-202 are enriched in low complexity. 2 stretches are compositionally biased toward polar residues: residues Arg-203–Gln-228 and Arg-258–Asn-268. T-SNARE coiled-coil homology domains lie at Lys-313–Leu-375 and Asp-467–Ile-529.

It belongs to the SNAP-25 family.

It is found in the membrane. Late secretory t-SNARE protein required for secretion and proper cytokinesis. Plays an important role in the secretion of virulence-associated extracellular enzymes and vesicle-mediated polarized hyphal growth. The chain is Protein transport protein SEC9 (SEC9) from Candida albicans (strain SC5314 / ATCC MYA-2876) (Yeast).